We begin with the raw amino-acid sequence, 92 residues long: Small ribosomal subunit protein uS19 (92 aa).

This sequence belongs to the universal ribosomal protein uS19 family.

In terms of biological role, protein S19 forms a complex with S13 that binds strongly to the 16S ribosomal RNA. The sequence is that of Small ribosomal subunit protein uS19 from Borrelia duttonii (strain Ly).